The following is a 301-amino-acid chain: Fatty acid elongase 3 (301 aa).

7 helical membrane passes run 31–51 (VPYI…KSIM), 64–84 (IVWN…TVPY), 122–142 (ALAD…LFAL), 161–181 (VIFL…FAYV), 187–207 (GLWF…YYFV), 219–239 (FAPI…IVVC), and 257–277 (FSLH…SQLF). The HxxHH motif signature appears at 165–169 (HWYHH). H168 functions as the Nucleophile in the catalytic mechanism.

Belongs to the ELO family.

Its subcellular location is the endoplasmic reticulum membrane. It carries out the reaction an acyl-CoA + malonyl-CoA + H(+) = a 3-oxoacyl-CoA + CO2 + CoA. The protein operates within lipid metabolism; fatty acid biosynthesis. Involved in the synthesis of fatty acids. Elongates C14 fatty acids to C18. This chain is Fatty acid elongase 3, found in Trypanosoma brucei brucei (strain 927/4 GUTat10.1).